We begin with the raw amino-acid sequence, 1529 residues long: Ras guanine nucleotide exchange factor B (1529 aa).

Positions 135–186 (ISNIEKQLSNLVNLKSNTTEQTDRKYKTNLIDFKESIIQLEKDCKNLLKQSN) form a coiled coil. Disordered stretches follow at residues 290–357 (INTL…ISIN), 576–600 (TTTT…KSSH), 680–724 (KRNT…HIQQ), 847–948 (MGKE…NHNR), and 1168–1206 (QPPQ…STNL). 3 stretches are compositionally biased toward low complexity: residues 576–591 (TTTT…TTTN), 683–724 (TSSG…HIQQ), and 853–887 (NSNT…NNNE). Coiled coils occupy residues 722–798 (IQQI…LNRK) and 871–898 (NNNN…ETNK). Positions 888–898 (NKNENKNETNK) are enriched in basic and acidic residues. Composition is skewed to low complexity over residues 906-916 (SSTSTLSSSTT), 924-940 (SSTN…LLPP), 1168-1187 (QPPQ…TTQP), and 1197-1206 (QPQLQQSTNL). An N-terminal Ras-GEF domain is found at 1075–1205 (FYRSIKYASL…PQPQLQQSTN (131 aa)). The Ras-GEF domain maps to 1282–1517 (SSTDIAEQLT…YEQSILLEPK (236 aa)).

It localises to the cytoplasm. In terms of biological role, promotes the exchange of Ras-bound GDP by GTP. Involved in phagocytosis, fluid-phase endocytosis, regulation of macropinocytosis and control of cell movement. In Dictyostelium discoideum (Social amoeba), this protein is Ras guanine nucleotide exchange factor B (gefB).